We begin with the raw amino-acid sequence, 60 residues long: Large ribosomal subunit protein uL30 (60 aa).

The protein belongs to the universal ribosomal protein uL30 family. Part of the 50S ribosomal subunit.

In Shewanella sp. (strain ANA-3), this protein is Large ribosomal subunit protein uL30.